The primary structure comprises 311 residues: Porphobilinogen deaminase (311 aa).

At Cys241 the chain carries S-(dipyrrolylmethanemethyl)cysteine.

The protein belongs to the HMBS family. In terms of assembly, monomer. The cofactor is dipyrromethane.

The enzyme catalyses 4 porphobilinogen + H2O = hydroxymethylbilane + 4 NH4(+). Its pathway is porphyrin-containing compound metabolism; protoporphyrin-IX biosynthesis; coproporphyrinogen-III from 5-aminolevulinate: step 2/4. Functionally, tetrapolymerization of the monopyrrole PBG into the hydroxymethylbilane pre-uroporphyrinogen in several discrete steps. This chain is Porphobilinogen deaminase, found in Carboxydothermus hydrogenoformans (strain ATCC BAA-161 / DSM 6008 / Z-2901).